The primary structure comprises 338 residues: Nicotinate-nucleotide--dimethylbenzimidazole phosphoribosyltransferase (338 aa).

Glutamate 306 functions as the Proton acceptor in the catalytic mechanism.

This sequence belongs to the CobT family.

The catalysed reaction is 5,6-dimethylbenzimidazole + nicotinate beta-D-ribonucleotide = alpha-ribazole 5'-phosphate + nicotinate + H(+). The protein operates within nucleoside biosynthesis; alpha-ribazole biosynthesis; alpha-ribazole from 5,6-dimethylbenzimidazole: step 1/2. In terms of biological role, catalyzes the synthesis of alpha-ribazole-5'-phosphate from nicotinate mononucleotide (NAMN) and 5,6-dimethylbenzimidazole (DMB). This chain is Nicotinate-nucleotide--dimethylbenzimidazole phosphoribosyltransferase, found in Cereibacter sphaeroides (strain KD131 / KCTC 12085) (Rhodobacter sphaeroides).